Reading from the N-terminus, the 84-residue chain is Large ribosomal subunit protein bL27 (84 aa).

The interval Met1–Leu21 is disordered.

This sequence belongs to the bacterial ribosomal protein bL27 family.

The sequence is that of Large ribosomal subunit protein bL27 from Chloroherpeton thalassium (strain ATCC 35110 / GB-78).